A 108-amino-acid chain; its full sequence is uncharacterized protein (108 aa).

A helical membrane pass occupies residues 59–81 (NIVIILWKIMVVIISSIIHRTYI).

Its subcellular location is the membrane. This is an uncharacterized protein from Rickettsia conorii (strain ATCC VR-613 / Malish 7).